The chain runs to 262 residues: Small ribosomal subunit protein mS23 (262 aa).

Positions 211–262 are disordered; sequence SGQSDEAPEGEGSDMSAGEYDMAVEELAGQGSIPNTPQSTVVPEGTSAPAHA. The span at 242–251 shows a compositional bias: polar residues; the sequence is SIPNTPQSTV.

The protein belongs to the mitochondrion-specific ribosomal protein mS23 family. Component of the mitochondrial small ribosomal subunit.

The protein localises to the mitochondrion. This is Small ribosomal subunit protein mS23 (RSM25) from Phaeosphaeria nodorum (strain SN15 / ATCC MYA-4574 / FGSC 10173) (Glume blotch fungus).